Here is a 535-residue protein sequence, read N- to C-terminus: Proto-oncogene tyrosine-protein kinase Src (535 aa).

Positions 1–56 (MGSNKSKPKDASQRRRSLEPSENVHGAGGAFPASQTPSKPASADGHRGPSAAFVPP) are disordered. The N-myristoyl glycine moiety is linked to residue glycine 2. The segment covering 7–19 (KPKDASQRRRSLE) has biased composition (basic and acidic residues). Serine 17, serine 21, and serine 74 each carry phosphoserine. One can recognise an SH3 domain in the interval 83–144 (GGVTTFVALY…PSNYVAPSDS (62 aa)). The SH2 domain maps to 150–247 (WYFGKITRRE…GLCHRLTTVC (98 aa)). Residue tyrosine 186 is modified to Phosphotyrosine. The Protein kinase domain maps to 269-522 (LRLEVKLGQG…YLQAFLEDYF (254 aa)). Residues 275 to 283 (LGQGCFGEV) and lysine 297 each bind ATP. The active-site Proton acceptor is the aspartate 388. Phosphotyrosine; by autocatalysis is present on tyrosine 418. Position 418 is a phosphotyrosine; by FAK2 (tyrosine 418). Tyrosine 529 is modified (phosphotyrosine; by CSK).

This sequence belongs to the protein kinase superfamily. Tyr protein kinase family. SRC subfamily. As to quaternary structure, part of a complex comprised of PTPRA, BCAR1, BCAR3 (via SH2 domain) and SRC; the formation of the complex is dependent on integrin mediated-tyrosine phosphorylation of PTPRA. Interacts with CDCP1, TGFB1I1 and TOM1L2. Interacts with DDEF1/ASAP1 via its SH3 domain. Interacts with CCPG1. Interacts with the cytoplasmic domain of MUC1, phosphorylates it and increases binding of MUC1 with beta-catenin. Interacts with RALGPS1 via its SH3 domain. Interacts with CAV2 (tyrosine phosphorylated form). Interacts (via the SH3 domain and the protein kinase domain) with ARRB1; the interaction is independent of the phosphorylation state of SRC C-terminus. Interacts with FCAMR and PXN. Interacts with ARRB2. Interacts with ARRB1. Interacts with SRCIN1. Interacts with NDFIP2 and more weakly with NDFIP1. Interacts with PIK3CA and/or PIK3C2B, PTK2/FAK1, ESR1 (dimethylated on arginine) and FAK. Interacts (via SH2 and SH3 domain) with TNK2. Interacts (via protein kinase domain) with the tyrosine phosphorylated form of RUNX3 (via runt domain). Interacts with TRAF3 (via RING-type zinc finger domain). Interacts with RIGI, MAVS and TBK1. Interacts (via SH2 domain) with RACK1; the interaction is enhanced by tyrosine phosphorylation of RACK1 and inhibits SRC activity. Interacts (via SH2 domain) with the 'Tyr-402' phosphorylated form of PTK2B/PYK2. Interacts (via SH2 domain) with FLT3 (tyrosine phosphorylated). Identified in a complex containing FGFR4, NCAM1, CDH2, PLCG1, FRS2, SRC, SHC1, GAP43 and CTTN. Interacts with EPHB1; activates the MAPK/ERK cascade to regulate cell migration. Interacts with ERBB2 and STAT1. Interacts with PDGFRA (tyrosine phosphorylated). Interacts with CSF1R. Interacts (via SH2 domain) with the 'Tyr-9' phosphorylated form of PDPK1. Interacts with DDR2. Interacts with AMOTL2; this interaction regulates the translocation of phosphorylated SRC to peripheral cell-matrix adhesion sites. Interacts with DDR1 and DAB2. Interacts with TRAP1. Interacts with CBLC; the interaction is enhanced when SRC is phosphorylated at 'Tyr-424'. Interacts with ARHGEF5. Interacts (via cytoplasmic domain) with CEACAM1 (via SH2 domain); this interaction is regulated by trans-homophilic cell adhesion. Interacts with MPP2. Interacts with PRR7. Interacts (via kinase domain and to a lesser extent the SH2 domain) directly with PDLIM4; this interaction results in PTPN13-mediated dephosphorylation of this protein leading to its inactivation. Interacts with P85 (PIK3R1 or PIK3R2). Interacts with HNRNPA2B1. Interacts with IL6ST/gp130. Interacts (via SH3 domain) with PELP1 in the presence of 17-beta-estradiol. Interacts with AMBRA1. Myristoylated at Gly-2, and this is essential for targeting to membranes. In terms of processing, dephosphorylated at Tyr-529 by PTPRJ. Phosphorylated on Tyr-529 by c-Src kinase (CSK). The phosphorylated form is termed pp60c-src. Dephosphorylated by PTPRJ at Tyr-418. Normally maintained in an inactive conformation with the SH2 domain engaged with Tyr-529, the SH3 domain engaged with the SH2-kinase linker, and Tyr-418 dephosphorylated. Dephosphorylation of Tyr-529 as a result of protein tyrosine phosphatase (PTP) action disrupts the intramolecular interaction between the SH2 domain and Tyr-529, Tyr-418 can then become autophosphorylated, resulting in SRC activation. Phosphorylation of Tyr-529 by CSK allows this interaction to reform, resulting in SRC inactivation. CDK5-mediated phosphorylation at Ser-74 targets SRC to ubiquitin-dependent degradation and thus leads to cytoskeletal reorganization. Phosphorylated by PTK2/FAK1; this enhances kinase activity. Phosphorylated by PTK2B/PYK2; this enhances kinase activity. Upon activation of IL6ST by IL6, Tyr-418 is phosphorylated and Tyr-529 dephosphorylated. Post-translationally, displays reduced levels of autophosphorylation at Tyr-418 compared to isoform 2. Displays enhanced levels of autophosphorylation at Tyr-418 compared to isoform 1. In terms of processing, S-nitrosylation is important for activation of its kinase activity. Post-translationally, ubiquitinated in response to CDK5-mediated phosphorylation. Ubiquitination mediated by CBLC requires SRC autophosphorylation at Tyr-418 and may lead to lysosomal degradation.

The protein resides in the cell membrane. It localises to the mitochondrion inner membrane. The protein localises to the nucleus. It is found in the cytoplasm. Its subcellular location is the cytoskeleton. The protein resides in the perinuclear region. It localises to the cell junction. The protein localises to the focal adhesion. The enzyme catalyses L-tyrosyl-[protein] + ATP = O-phospho-L-tyrosyl-[protein] + ADP + H(+). Its activity is regulated as follows. Phosphorylation by CSK at Tyr-529 inhibits kinase activity. Inhibitory phosphorylation at Tyr-529 is enhanced by heme. Further phosphorylation by CDK1 partially reactivates CSK-inactivated SRC and facilitates complete reactivation by protein tyrosine phosphatase PTPRC. Integrin engagement stimulates kinase activity. Phosphorylation by PTK2/FAK1 enhances kinase activity. Butein and pseudosubstrate-based peptide inhibitors like CIYKYYF act as inhibitors. Phosphorylation at Tyr-418 increases kinase activity. Non-receptor protein tyrosine kinase which is activated following engagement of many different classes of cellular receptors including immune response receptors, integrins and other adhesion receptors, receptor protein tyrosine kinases, G protein-coupled receptors as well as cytokine receptors. Participates in signaling pathways that control a diverse spectrum of biological activities including gene transcription, immune response, cell adhesion, cell cycle progression, apoptosis, migration, and transformation. Due to functional redundancy between members of the SRC kinase family, identification of the specific role of each SRC kinase is very difficult. SRC appears to be one of the primary kinases activated following engagement of receptors and plays a role in the activation of other protein tyrosine kinase (PTK) families. Receptor clustering or dimerization leads to recruitment of SRC to the receptor complexes where it phosphorylates the tyrosine residues within the receptor cytoplasmic domains. Plays an important role in the regulation of cytoskeletal organization through phosphorylation of specific substrates such as AFAP1. Phosphorylation of AFAP1 allows the SRC SH2 domain to bind AFAP1 and to localize to actin filaments. Cytoskeletal reorganization is also controlled through the phosphorylation of cortactin (CTTN). When cells adhere via focal adhesions to the extracellular matrix, signals are transmitted by integrins into the cell resulting in tyrosine phosphorylation of a number of focal adhesion proteins, including PTK2/FAK1 and paxillin (PXN). In addition to phosphorylating focal adhesion proteins, SRC is also active at the sites of cell-cell contact adherens junctions and phosphorylates substrates such as beta-catenin (CTNNB1), delta-catenin (CTNND1), and plakoglobin (JUP). Another type of cell-cell junction, the gap junction, is also a target for SRC, which phosphorylates connexin-43 (GJA1). SRC is implicated in regulation of pre-mRNA-processing and phosphorylates RNA-binding proteins such as KHDRBS1. Phosphorylates PKP3 at 'Tyr-195' in response to reactive oxygen species, which may cause the release of PKP3 from desmosome cell junctions into the cytoplasm. Also plays a role in PDGF-mediated tyrosine phosphorylation of both STAT1 and STAT3, leading to increased DNA binding activity of these transcription factors. Involved in the RAS pathway through phosphorylation of RASA1 and RASGRF1. Plays a role in EGF-mediated calcium-activated chloride channel activation. Required for epidermal growth factor receptor (EGFR) internalization through phosphorylation of clathrin heavy chain (CLTC and CLTCL1) at 'Tyr-1477'. Involved in beta-arrestin (ARRB1 and ARRB2) desensitization through phosphorylation and activation of GRK2, leading to beta-arrestin phosphorylation and internalization. Has a critical role in the stimulation of the CDK20/MAPK3 mitogen-activated protein kinase cascade by epidermal growth factor. Might be involved not only in mediating the transduction of mitogenic signals at the level of the plasma membrane but also in controlling progression through the cell cycle via interaction with regulatory proteins in the nucleus. Plays an important role in osteoclastic bone resorption in conjunction with PTK2B/PYK2. Both the formation of a SRC-PTK2B/PYK2 complex and SRC kinase activity are necessary for this function. Recruited to activated integrins by PTK2B/PYK2, thereby phosphorylating CBL, which in turn induces the activation and recruitment of phosphatidylinositol 3-kinase to the cell membrane in a signaling pathway that is critical for osteoclast function. Promotes energy production in osteoclasts by activating mitochondrial cytochrome C oxidase. Phosphorylates DDR2 on tyrosine residues, thereby promoting its subsequent autophosphorylation. Phosphorylates RUNX3 and COX2 on tyrosine residues, TNK2 on 'Tyr-284' and CBL on 'Tyr-738'. Enhances RIGI-elicited antiviral signaling. Phosphorylates PDPK1 at 'Tyr-9', 'Tyr-373' and 'Tyr-376'. Phosphorylates BCAR1 at 'Tyr-226'. Phosphorylates CBLC at multiple tyrosine residues, phosphorylation at 'Tyr-341' activates CBLC E3 activity. Phosphorylates synaptic vesicle protein synaptophysin (SYP). Involved in anchorage-independent cell growth. Required for podosome formation. Mediates IL6 signaling by activating YAP1-NOTCH pathway to induce inflammation-induced epithelial regeneration. Phosphorylates OTUB1, promoting deubiquitination of RPTOR. In terms of biological role, non-receptor protein tyrosine kinase which phosphorylates synaptophysin with high affinity. Its function is as follows. Non-receptor protein tyrosine kinase which shows higher basal kinase activity than isoform 1, possibly due to weakened intramolecular interactions which enhance autophosphorylation of Tyr-418 and subsequent activation. The SH3 domain shows reduced affinity with the linker sequence between the SH2 and kinase domains which may account for the increased basal activity. Displays altered substrate specificity compared to isoform 1, showing weak affinity for synaptophysin and for peptide substrates containing class I or class II SH3 domain-binding motifs. Plays a role in L1CAM-mediated neurite elongation, possibly by acting downstream of L1CAM to drive cytoskeletal rearrangements involved in neurite outgrowth. This chain is Proto-oncogene tyrosine-protein kinase Src, found in Mus musculus (Mouse).